The sequence spans 1795 residues: Protein TIC 214 (1795 aa).

The next 6 membrane-spanning stretches (helical) occupy residues 19–39, 68–88, 91–111, 133–153, 176–196, and 227–247; these read IINS…FSIG, FIAG…HLAL, PHTI…WNNH, VFLN…SSML, VGWL…LVWI, and IFSI…PSPI. A disordered region spans residues 1490 to 1517; sequence EKESTGQVEFESDKEQQRNSESALSNQE. Polar residues predominate over residues 1508-1517; the sequence is NSESALSNQE.

It belongs to the TIC214 family. In terms of assembly, part of the Tic complex.

The protein resides in the plastid. It is found in the chloroplast inner membrane. Its function is as follows. Involved in protein precursor import into chloroplasts. May be part of an intermediate translocation complex acting as a protein-conducting channel at the inner envelope. In Crucihimalaya wallichii (Rock-cress), this protein is Protein TIC 214.